We begin with the raw amino-acid sequence, 275 residues long: uncharacterized protein (275 aa).

A run of 6 helical transmembrane segments spans residues 25 to 45 (LGYF…FMTA), 70 to 90 (LLFF…LSAI), 107 to 127 (IGNF…LRFV), 149 to 169 (FGQW…IVQF), 203 to 223 (IARA…AMTA), and 247 to 267 (ILSI…MKGI).

The protein resides in the cell membrane. This is an uncharacterized protein from Bacillus subtilis (strain 168).